The sequence spans 144 residues: uncharacterized protein (144 aa).

A run of 2 helical transmembrane segments spans residues 10 to 30 (ILTRSSIIIGVIILVASGLGP) and 60 to 80 (YVFLIYTVSLTKMVGTLAIAV).

It localises to the membrane. This is an uncharacterized protein from Saccharomyces cerevisiae (strain ATCC 204508 / S288c) (Baker's yeast).